A 672-amino-acid chain; its full sequence is PHD finger protein MALE STERILITY 1 (672 aa).

Residues 614–664 form a PHD-type zinc finger; sequence RIECECGATEEDGERMVCCDICEVWQHTRCVGVQHNEEVPRIFLCQSCDQH.

As to expression, in closed flower buds, especially in anthers.

Its subcellular location is the nucleus. In terms of biological role, transcriptional activator required for anther and post-meiotic pollen development and maturation. Seems to regulate inflorescence branching and floral development. May control tapetal development by directly regulating tapetal programmed cell death (PCD) and breakdown. Implicated in pollen cytosolic components and wall development (e.g. exine and intine formation). The sequence is that of PHD finger protein MALE STERILITY 1 (MS1) from Arabidopsis thaliana (Mouse-ear cress).